Here is a 104-residue protein sequence, read N- to C-terminus: Large ribosomal subunit protein uL24 (104 aa).

It belongs to the universal ribosomal protein uL24 family. Part of the 50S ribosomal subunit.

In terms of biological role, one of two assembly initiator proteins, it binds directly to the 5'-end of the 23S rRNA, where it nucleates assembly of the 50S subunit. One of the proteins that surrounds the polypeptide exit tunnel on the outside of the subunit. This is Large ribosomal subunit protein uL24 from Pseudomonas fluorescens (strain Pf0-1).